The following is an 89-amino-acid chain: Large ribosomal subunit protein bL27 (89 aa).

It belongs to the bacterial ribosomal protein bL27 family.

The chain is Large ribosomal subunit protein bL27 from Cereibacter sphaeroides (strain ATCC 17029 / ATH 2.4.9) (Rhodobacter sphaeroides).